Consider the following 274-residue polypeptide: Small ribosomal subunit protein uS2 (274 aa).

Belongs to the universal ribosomal protein uS2 family.

This is Small ribosomal subunit protein uS2 from Syntrophobacter fumaroxidans (strain DSM 10017 / MPOB).